The sequence spans 379 residues: uncharacterized protein (379 aa).

Disordered stretches follow at residues Met-1–Pro-20, Val-227–His-290, and Pro-331–His-371. Residues Gln-7–Pro-20 show a composition bias toward low complexity. A compositionally biased stretch (basic and acidic residues) spans Gly-249–Arg-261.

This is an uncharacterized protein from Dryophytes versicolor (chameleon treefrog).